A 475-amino-acid polypeptide reads, in one-letter code: Aspartyl/glutamyl-tRNA(Asn/Gln) amidotransferase subunit B (475 aa).

This sequence belongs to the GatB/GatE family. GatB subfamily. Heterotrimer of A, B and C subunits.

It carries out the reaction L-glutamyl-tRNA(Gln) + L-glutamine + ATP + H2O = L-glutaminyl-tRNA(Gln) + L-glutamate + ADP + phosphate + H(+). It catalyses the reaction L-aspartyl-tRNA(Asn) + L-glutamine + ATP + H2O = L-asparaginyl-tRNA(Asn) + L-glutamate + ADP + phosphate + 2 H(+). Allows the formation of correctly charged Asn-tRNA(Asn) or Gln-tRNA(Gln) through the transamidation of misacylated Asp-tRNA(Asn) or Glu-tRNA(Gln) in organisms which lack either or both of asparaginyl-tRNA or glutaminyl-tRNA synthetases. The reaction takes place in the presence of glutamine and ATP through an activated phospho-Asp-tRNA(Asn) or phospho-Glu-tRNA(Gln). The chain is Aspartyl/glutamyl-tRNA(Asn/Gln) amidotransferase subunit B from Staphylococcus epidermidis (strain ATCC 12228 / FDA PCI 1200).